We begin with the raw amino-acid sequence, 135 residues long: Cytochrome c2 (135 aa).

The first 23 residues, methionine 1–alanine 23, serve as a signal peptide directing secretion. Heme c-binding residues include cysteine 37, cysteine 40, histidine 41, and methionine 114.

Belongs to the cytochrome c family. In terms of processing, binds 1 heme c group covalently per subunit.

Cytochrome c2 is found mainly in purple, non-sulfur, photosynthetic bacteria where it functions as the electron donor to the oxidized bacteriochlorophyll in the photophosphorylation pathway. However, it may also have a role in the respiratory chain and is found in some non-photosynthetic bacteria. The chain is Cytochrome c2 (cycA) from Rhodospirillum rubrum (strain ATCC 11170 / ATH 1.1.1 / DSM 467 / LMG 4362 / NCIMB 8255 / S1).